Here is a 230-residue protein sequence, read N- to C-terminus: Sugar fermentation stimulation protein homolog (230 aa).

This sequence belongs to the SfsA family.

The polypeptide is Sugar fermentation stimulation protein homolog (Clostridium botulinum (strain Alaska E43 / Type E3)).